A 274-amino-acid chain; its full sequence is Diaminopimelate epimerase (274 aa).

Residues Asn-11, Gln-44, and Asn-64 each contribute to the substrate site. Cys-73 functions as the Proton donor in the catalytic mechanism. Substrate contacts are provided by residues 74-75, Asn-157, Asn-190, and 208-209; these read GN and ER. Cys-217 functions as the Proton acceptor in the catalytic mechanism. 218 to 219 is a substrate binding site; that stretch reads GS.

The protein belongs to the diaminopimelate epimerase family. Homodimer.

The protein localises to the cytoplasm. The catalysed reaction is (2S,6S)-2,6-diaminopimelate = meso-2,6-diaminopimelate. It functions in the pathway amino-acid biosynthesis; L-lysine biosynthesis via DAP pathway; DL-2,6-diaminopimelate from LL-2,6-diaminopimelate: step 1/1. In terms of biological role, catalyzes the stereoinversion of LL-2,6-diaminopimelate (L,L-DAP) to meso-diaminopimelate (meso-DAP), a precursor of L-lysine and an essential component of the bacterial peptidoglycan. This Histophilus somni (strain 2336) (Haemophilus somnus) protein is Diaminopimelate epimerase.